Consider the following 354-residue polypeptide: MSIEVRGLSKRFGAFRALDEVSLHIETGELVALLGPSGCGKTTLLRIIAGLESADAGSVLFAGEDATEVDVRQRQVGFVFQHYALFKHMTVFENVAFGLRVRHRSQRPSEARIRAKVLDLLGLVQLDWLADRYPAQLSGGQRQRIALARALAVEPRVLLLDEPFGALDAKVRKELRRWLRRLHDELHVASVFVTHDQEEALEVTDRVVLMNAGRIEQVGSPREVWERPATPFVYGFLGDVNQLHGHATRGVWRLGEVALPAPDLPEADNQRAIAYVRPHDIDLARAGTAAPGIPVRLNHVYLAGPSAYLELARQDDQAIIEAQVPEPLFRSLGLKEGEALLAQPRRARVFAVQP.

In terms of domain architecture, ABC transporter spans 3–237; the sequence is IEVRGLSKRF…PATPFVYGFL (235 aa). 35–42 is an ATP binding site; the sequence is GPSGCGKT.

This sequence belongs to the ABC transporter superfamily. Sulfate/tungstate importer (TC 3.A.1.6) family. As to quaternary structure, the complex is composed of two ATP-binding proteins (CysA), two transmembrane proteins (CysT and CysW) and a solute-binding protein (CysP).

The protein localises to the cell inner membrane. It catalyses the reaction sulfate(out) + ATP + H2O = sulfate(in) + ADP + phosphate + H(+). The enzyme catalyses thiosulfate(out) + ATP + H2O = thiosulfate(in) + ADP + phosphate + H(+). Functionally, part of the ABC transporter complex CysAWTP involved in sulfate/thiosulfate import. Responsible for energy coupling to the transport system. The sequence is that of Sulfate/thiosulfate import ATP-binding protein CysA from Bordetella pertussis (strain Tohama I / ATCC BAA-589 / NCTC 13251).